A 287-amino-acid polypeptide reads, in one-letter code: Casein kinase II subunit beta-1 (287 aa).

The segment at 1–97 (MYRDRGTVNS…ESDVSGSDGE (97 aa)) is disordered. Positions 13–25 (EVVDRKRINDALE) are enriched in basic and acidic residues. Residues 41–50 (GTVTAATTTA) show a composition bias toward low complexity. Acidic residues predominate over residues 78–97 (SDDESDTDSEESDVSGSDGE).

Belongs to the casein kinase 2 subunit beta family. As to quaternary structure, heterotetramer of two catalytic alpha subunits and two regulatory beta subunits. Interacts with CCA1. Interacts with LHY. Post-translationally, phosphorylated by alpha subunit.

It localises to the cytoplasm. Its subcellular location is the cytosol. The protein localises to the nucleus. Functionally, plays a complex role in regulating the basal catalytic activity of the alpha subunit. The tetrameric holoenzyme CK2, composed of two alpha and two beta subunits, phosphorylates the transcription factor GBFl, resulting in stimulation of its DNA binding activity. CK2 phosphorylates the transcription factor PIF1 after an exposure to light, resulting in a proteasome-dependent degradation of PIF1 and promotion of photomorphogenesis. CK2 phosphorylates translation initiation factors. May participate in the regulation of the initiation of translation. Stimulates the binding of CCA1 to promoters. The sequence is that of Casein kinase II subunit beta-1 (CKB1) from Arabidopsis thaliana (Mouse-ear cress).